The primary structure comprises 377 residues: Succinyl-diaminopimelate desuccinylase 2 (377 aa).

Residue H62 coordinates Zn(2+). D64 is a catalytic residue. Zn(2+) is bound at residue D95. E129 acts as the Proton acceptor in catalysis. E130, E158, and H350 together coordinate Zn(2+).

It belongs to the peptidase M20A family. DapE subfamily. As to quaternary structure, homodimer. The cofactor is Zn(2+). Co(2+) is required as a cofactor.

The catalysed reaction is N-succinyl-(2S,6S)-2,6-diaminopimelate + H2O = (2S,6S)-2,6-diaminopimelate + succinate. It functions in the pathway amino-acid biosynthesis; L-lysine biosynthesis via DAP pathway; LL-2,6-diaminopimelate from (S)-tetrahydrodipicolinate (succinylase route): step 3/3. Catalyzes the hydrolysis of N-succinyl-L,L-diaminopimelic acid (SDAP), forming succinate and LL-2,6-diaminopimelate (DAP), an intermediate involved in the bacterial biosynthesis of lysine and meso-diaminopimelic acid, an essential component of bacterial cell walls. This chain is Succinyl-diaminopimelate desuccinylase 2, found in Shewanella loihica (strain ATCC BAA-1088 / PV-4).